The chain runs to 104 residues: Large ribosomal subunit protein bL21 (104 aa).

It belongs to the bacterial ribosomal protein bL21 family. As to quaternary structure, part of the 50S ribosomal subunit. Contacts protein L20.

Its function is as follows. This protein binds to 23S rRNA in the presence of protein L20. This is Large ribosomal subunit protein bL21 from Lactococcus lactis subsp. cremoris (strain MG1363).